A 325-amino-acid chain; its full sequence is MSETATWQPSASIPNLLKRAAIMAEIRRFFADRGVLEVETPCMSQATVTDIHLFPFETRFVGPGHSQGINLYLMTSPEYHMKRLLAAGCGPVFQLCRSFRNEEMGRHHNPEFTMLEWYRPHYDMYRLMNEVDDLLQQVLDCQPAESLSYQQAFLRHLEIDPLSADKTQLREAAAKLDLSNIADTEEDRDTLLQLLFTMGVEPHIGKEKPTFIYHFPASQASLAQISTEDHRVAERFEVYYKGIELANGFHELTDAREQQQRFEQDNRKRAARGLPQQPIDQNLLDALAAGLPDCSGVALGVDRLVMLALGAESLADVIAFTVDRA.

76–78 is a substrate binding site; it reads SPE. Residues 100–102 and N109 contribute to the ATP site; that span reads RNE. Y118 is a binding site for substrate. 244-245 contributes to the ATP binding site; it reads EL. E251 contacts substrate. G300 contacts ATP.

This sequence belongs to the class-II aminoacyl-tRNA synthetase family. EpmA subfamily. Homodimer.

The catalysed reaction is D-beta-lysine + L-lysyl-[protein] + ATP = N(6)-((3R)-3,6-diaminohexanoyl)-L-lysyl-[protein] + AMP + diphosphate + H(+). With EpmB is involved in the beta-lysylation step of the post-translational modification of translation elongation factor P (EF-P) on 'Lys-34'. Catalyzes the ATP-dependent activation of (R)-beta-lysine produced by EpmB, forming a lysyl-adenylate, from which the beta-lysyl moiety is then transferred to the epsilon-amino group of EF-P 'Lys-34'. In Salmonella typhi, this protein is Elongation factor P--(R)-beta-lysine ligase.